The chain runs to 308 residues: Carbonic anhydrase 4 (308 aa).

The first 18 residues, Met-1–Gly-18, serve as a signal peptide directing secretion. One can recognise an Alpha-carbonic anhydrase domain in the interval Leu-21–Gln-281. Intrachain disulfides connect Cys-24/Cys-34 and Cys-44/Cys-225. The N-linked (GlcNAc...) asparagine glycan is linked to Asn-31. His-86 serves as the catalytic Proton donor/acceptor. Residues His-113, His-115, and His-138 each contribute to the Zn(2+) site. A glycan (N-linked (GlcNAc...) asparagine) is linked at Asn-192. Thr-221–Thr-222 lines the substrate pocket. Residue Ser-280 is the site of GPI-anchor amidated serine attachment. Residues Gln-281–Arg-308 constitute a propeptide, removed in mature form.

The protein belongs to the alpha-carbonic anhydrase family. As to quaternary structure, interacts with SLC4A4. Zn(2+) is required as a cofactor.

It localises to the cell membrane. The enzyme catalyses hydrogencarbonate + H(+) = CO2 + H2O. Inhibited by acetazolamide. Catalyzes the reversible hydration of carbon dioxide into bicarbonate and protons and thus is essential to maintaining intracellular and extracellular pH. May stimulate the sodium/bicarbonate transporter activity of SLC4A4 that acts in pH homeostasis. It is essential for acid overload removal from the retina and retina epithelium, and acid release in the choriocapillaris in the choroid. The polypeptide is Carbonic anhydrase 4 (CA4) (Oryctolagus cuniculus (Rabbit)).